A 488-amino-acid chain; its full sequence is Argininosuccinate lyase 2 (488 aa).

Belongs to the lyase 1 family. Argininosuccinate lyase subfamily.

Its subcellular location is the cytoplasm. The catalysed reaction is 2-(N(omega)-L-arginino)succinate = fumarate + L-arginine. It participates in amino-acid biosynthesis; L-arginine biosynthesis; L-arginine from L-ornithine and carbamoyl phosphate: step 3/3. The polypeptide is Argininosuccinate lyase 2 (Rhizobium meliloti (strain 1021) (Ensifer meliloti)).